The chain runs to 340 residues: Chitinase 7 (340 aa).

The first 32 residues, 1 to 32, serve as a signal peptide directing secretion; sequence MIAARAANLQVAMKALALAVLALAYAAATARA. The Chitin-binding type-1 domain occupies 33 to 73; it reads EQCGRQAGGARCPNRLCCSRWGWCGLTDDYCKGGCQSQCRV. Cystine bridges form between Cys-35/Cys-50, Cys-44/Cys-56, Cys-49/Cys-63, Cys-67/Cys-71, Cys-118/Cys-173, Cys-185/Cys-193, and Cys-293/Cys-323.

It belongs to the glycosyl hydrolase 19 family. Chitinase class I subfamily. In terms of tissue distribution, expressed in pistils, stamens and lodicules.

It carries out the reaction Random endo-hydrolysis of N-acetyl-beta-D-glucosaminide (1-&gt;4)-beta-linkages in chitin and chitodextrins.. Its function is as follows. Hydrolyzes chitin and may play a role in defense against fungal pathogens containing chitin. This Oryza sativa subsp. japonica (Rice) protein is Chitinase 7 (Cht7).